The sequence spans 447 residues: GTPase Der (447 aa).

2 EngA-type G domains span residues 3–167 (PVIA…ALPE) and 180–353 (IRLA…KSAN). Residues 9–16 (GRPNVGKS), 56–60 (DTGGF), 119–122 (NKAE), 186–193 (GRPNVGKS), 233–237 (DTAGL), and 298–301 (NKWD) contribute to the GTP site. The KH-like domain occupies 354-438 (RKMPTPVLTR…PLRIEMKTSS (85 aa)).

Belongs to the TRAFAC class TrmE-Era-EngA-EngB-Septin-like GTPase superfamily. EngA (Der) GTPase family. In terms of assembly, associates with the 50S ribosomal subunit.

GTPase that plays an essential role in the late steps of ribosome biogenesis. This is GTPase Der from Acidovorax sp. (strain JS42).